Reading from the N-terminus, the 728-residue chain is 1,4-alpha-glucan branching enzyme GlgB (728 aa).

The active-site Nucleophile is the aspartate 405. The Proton donor role is filled by glutamate 458.

The protein belongs to the glycosyl hydrolase 13 family. GlgB subfamily. As to quaternary structure, monomer.

The catalysed reaction is Transfers a segment of a (1-&gt;4)-alpha-D-glucan chain to a primary hydroxy group in a similar glucan chain.. Its pathway is glycan biosynthesis; glycogen biosynthesis. Its function is as follows. Catalyzes the formation of the alpha-1,6-glucosidic linkages in glycogen by scission of a 1,4-alpha-linked oligosaccharide from growing alpha-1,4-glucan chains and the subsequent attachment of the oligosaccharide to the alpha-1,6 position. In Escherichia coli O6:H1 (strain CFT073 / ATCC 700928 / UPEC), this protein is 1,4-alpha-glucan branching enzyme GlgB.